The sequence spans 451 residues: Lysine histidine transporter-like 3 (451 aa).

The Cytoplasmic segment spans residues Met-1–Tyr-40. The chain crosses the membrane as a helical span at residues Ser-41–Met-61. Residues Ser-62–Glu-63 lie on the Extracellular side of the membrane. Residues Leu-64–Phe-84 traverse the membrane as a helical segment. Residues Trp-85–Gly-115 lie on the Cytoplasmic side of the membrane. The helical transmembrane segment at Leu-116–Val-136 threads the bilayer. At Thr-137–Lys-159 the chain is on the extracellular side. The helical transmembrane segment at Val-160–Leu-177 threads the bilayer. The Cytoplasmic segment spans residues Lys-178–Ser-182. The chain crosses the membrane as a helical span at residues Ile-183–Val-203. Topologically, residues Ala-204 to Pro-227 are extracellular. The helical transmembrane segment at Leu-228–Leu-248 threads the bilayer. The Cytoplasmic segment spans residues Glu-249–Gly-269. A helical membrane pass occupies residues Ala-270–Trp-290. Over Thr-291 to Gly-309 the chain is Extracellular. The chain crosses the membrane as a helical span at residues Leu-310–Ala-330. Residues Met-331–Arg-358 lie on the Cytoplasmic side of the membrane. A helical transmembrane segment spans residues Trp-359–Leu-379. Ser-380 is a topological domain (extracellular). The helical transmembrane segment at Phe-381 to Ile-401 threads the bilayer. Over Leu-402–Cys-413 the chain is Cytoplasmic. A helical transmembrane segment spans residues Ile-414 to Leu-434. Residues Ala-435–Thr-451 lie on the Extracellular side of the membrane.

Belongs to the amino acid/polyamine transporter 2 family. Amino acid/auxin permease (AAAP) (TC 2.A.18.2) subfamily.

It is found in the cell membrane. Functionally, amino acid transporter. The chain is Lysine histidine transporter-like 3 from Arabidopsis thaliana (Mouse-ear cress).